The sequence spans 1229 residues: Putative cell division cycle ATPase (1229 aa).

Low complexity predominate over residues 252 to 267 (GKKNNNGNVKKGIKNV). The tract at residues 252–315 (GKKNNNGNVK…GGKNNSYYNE (64 aa)) is disordered. Residues 268–281 (PMDEKSYSPNDHDN) show a composition bias toward basic and acidic residues. A compositionally biased stretch (low complexity) spans 282–314 (NSNNSNNNNNNDNNNSNNNNNNNNGGKNNSYYN). Position 568–575 (568–575 (GIPGTGKT)) interacts with ATP. 2 disordered regions span residues 814–837 (TLLQ…DALD) and 860–892 (FSND…KNER). Basic and acidic residues-rich tracts occupy residues 819-837 (DKNE…DALD) and 882-892 (NPNDKLDKNER). Residue 975–982 (GPPGCGKT) participates in ATP binding.

The protein belongs to the AAA ATPase family.

This Plasmodium falciparum (isolate 3D7) protein is Putative cell division cycle ATPase.